A 438-amino-acid polypeptide reads, in one-letter code: Trigger factor (438 aa).

The PPIase FKBP-type domain maps to 162–247; it reads GDIVTIDFEG…VKDIKVKELP (86 aa).

Belongs to the FKBP-type PPIase family. Tig subfamily.

The protein localises to the cytoplasm. It catalyses the reaction [protein]-peptidylproline (omega=180) = [protein]-peptidylproline (omega=0). In terms of biological role, involved in protein export. Acts as a chaperone by maintaining the newly synthesized protein in an open conformation. Functions as a peptidyl-prolyl cis-trans isomerase. In Caldicellulosiruptor bescii (strain ATCC BAA-1888 / DSM 6725 / KCTC 15123 / Z-1320) (Anaerocellum thermophilum), this protein is Trigger factor.